A 646-amino-acid chain; its full sequence is Threonine--tRNA ligase (646 aa).

A TGS domain is found at 1-61; the sequence is MIKITFPDGS…NEDANFVLYK (61 aa). The interval 242-541 is catalytic; that stretch reads DHRKIGKEMD…LIEHTAGKFP (300 aa). Cys-337, His-388, and His-518 together coordinate Zn(2+).

Belongs to the class-II aminoacyl-tRNA synthetase family. Homodimer. Requires Zn(2+) as cofactor.

The protein resides in the cytoplasm. It catalyses the reaction tRNA(Thr) + L-threonine + ATP = L-threonyl-tRNA(Thr) + AMP + diphosphate + H(+). Catalyzes the attachment of threonine to tRNA(Thr) in a two-step reaction: L-threonine is first activated by ATP to form Thr-AMP and then transferred to the acceptor end of tRNA(Thr). Also edits incorrectly charged L-seryl-tRNA(Thr). In Phocaeicola vulgatus (strain ATCC 8482 / DSM 1447 / JCM 5826 / CCUG 4940 / NBRC 14291 / NCTC 11154) (Bacteroides vulgatus), this protein is Threonine--tRNA ligase.